Reading from the N-terminus, the 216-residue chain is MATRITNQKLSKSSRAWMREHLDDPFVKKAQKEGYRARAAYKLLEIQEKYRLIKPGMTVVDLGAAPGSWSQIAGKLVGSKGLVIASDILAMDTLPDVTFLQGDFREEEVFEKLLNILNGRTVDIVISDMAPNTSGNRAVDQPRQIYLCELALDFAQKVLGPDGQFVVKVFQGSGFDEFRKQVVDSFDVLKTVKPAASRARSKEVFLIGQGRKKALQ.

Residues Gly67, Trp69, Asp87, Asp103, and Asp128 each coordinate S-adenosyl-L-methionine. The active-site Proton acceptor is Lys168.

The protein belongs to the class I-like SAM-binding methyltransferase superfamily. RNA methyltransferase RlmE family.

Its subcellular location is the cytoplasm. It carries out the reaction uridine(2552) in 23S rRNA + S-adenosyl-L-methionine = 2'-O-methyluridine(2552) in 23S rRNA + S-adenosyl-L-homocysteine + H(+). Its function is as follows. Specifically methylates the uridine in position 2552 of 23S rRNA at the 2'-O position of the ribose in the fully assembled 50S ribosomal subunit. The sequence is that of Ribosomal RNA large subunit methyltransferase E from Acinetobacter baylyi (strain ATCC 33305 / BD413 / ADP1).